We begin with the raw amino-acid sequence, 305 residues long: MASRQPEVPALEPSGPLGKMSLPIGMYRRAFSYDDALEDPTPMTPPPSDMGSIPWKPVIPERKYQDLAKVEEGEPSVSPPAPAPPPATDSAEKAPVVKAKATHVIMSSLITKQTQESIQRFEQQAGLRDAGYTPHKGLTTEETKYLRVAEALHKLKLQSGETAREERQPASTQSTPSSSPQASPKQKSRGWFTSGSATALPGPSLSTMDSGSGDKDRSSADKWSLFGPRSLQKSESGGFAIQAYKGAQKPSPMEVMRAQATRRAEEPATFKPPKMDIPVMEGTKQLPRAHSLKPRDLNVLTPTGF.

Disordered stretches follow at residues 1 to 20 (MASR…LGKM), 36 to 96 (ALED…KAPV), and 156 to 278 (KLQS…MDIP). A Phosphothreonine modification is found at Thr44. Over residues 59–72 (IPERKYQDLAKVEE) the composition is skewed to basic and acidic residues. Positions 67–77 (LAKVEEGEPSV) match the Flavin-containing monooxygenase motif motif. Over residues 77–87 (VSPPAPAPPPA) the composition is skewed to pro residues. Residues 169 to 185 (PASTQSTPSSSPQASPK) show a composition bias toward low complexity. Residue Thr175 is modified to Phosphothreonine. At Ser183 the chain carries Phosphoserine.

The protein belongs to the P33MONOX family. In terms of assembly, interacts with NELFB, NOL12 and PRNP.

The protein resides in the cytoplasm. Potential NADPH-dependent oxidoreductase. May be involved in the regulation of neuronal survival, differentiation and axonal outgrowth. This Bos taurus (Bovine) protein is Putative monooxygenase p33MONOX (P33MONOX).